Reading from the N-terminus, the 348-residue chain is Protein RecA (348 aa).

67 to 74 contributes to the ATP binding site; it reads GPESSGKT.

The protein belongs to the RecA family.

It localises to the cytoplasm. Functionally, can catalyze the hydrolysis of ATP in the presence of single-stranded DNA, the ATP-dependent uptake of single-stranded DNA by duplex DNA, and the ATP-dependent hybridization of homologous single-stranded DNAs. It interacts with LexA causing its activation and leading to its autocatalytic cleavage. This chain is Protein RecA, found in Amycolatopsis mediterranei (strain U-32).